Consider the following 96-residue polypeptide: Large ribosomal subunit protein bL21 (96 aa).

Positions 73 to 84 are enriched in basic residues; the sequence is KRRKRYQSRNGH. Residues 73–96 form a disordered region; sequence KRRKRYQSRNGHRQQMTQIEVVSL. A compositionally biased stretch (polar residues) spans 85 to 96; sequence RQQMTQIEVVSL.

It belongs to the bacterial ribosomal protein bL21 family. As to quaternary structure, part of the 50S ribosomal subunit. Contacts protein L20.

Its function is as follows. This protein binds to 23S rRNA in the presence of protein L20. This is Large ribosomal subunit protein bL21 from Chlorobium luteolum (strain DSM 273 / BCRC 81028 / 2530) (Pelodictyon luteolum).